Consider the following 609-residue polypeptide: Manganese lipoxygenase (609 aa).

The signal sequence occupies residues 1-16 (MRLLLSIAGLTTVVNA). Residues asparagine 24, asparagine 115, asparagine 156, and asparagine 193 are each glycosylated (N-linked (GlcNAc...) asparagine). The 493-residue stretch at 117 to 609 (SLKAIQDHGG…PGVIPFYLSV (493 aa)) folds into the Lipoxygenase domain. Mn(2+) is bound by residues histidine 289 and histidine 294. Asparagine 385 carries an N-linked (GlcNAc...) asparagine glycan. Mn(2+) is bound by residues histidine 474 and asparagine 478. A glycan (N-linked (GlcNAc...) asparagine) is linked at asparagine 539. Residue valine 609 participates in Mn(2+) binding.

The protein belongs to the lipoxygenase family. Manganese lipoxygenase subfamily. The cofactor is Mn(2+). N- and O-glycosylated.

It localises to the secreted. The enzyme catalyses (9Z,12Z)-octadecadienoate + O2 = (9S)-hydroperoxy-(10E,12Z)-octadecadienoate. It carries out the reaction (9Z,12Z)-octadecadienoate + O2 = (11S)-hydroperoxy-(9Z,12Z)-octadecadienoate. The catalysed reaction is (9Z,12Z)-octadecadienoate + O2 = (13R)-hydroperoxy-(9Z,11E)-octadecadienoate. It catalyses the reaction (9Z,12Z,15Z)-octadecatrienoate + O2 = (11R)-hydroperoxy-(9Z,12Z,15Z)-octadecatrienoate. Functionally, lipoxygenase that metabolizes linoleic and alpha-linolenic acids to 9-, 11- and 13-hydroperoxy fatty acids. Oxidizes linoleic acid to mainly 9S- and 13R-HPODE and alpha-linolenic acid to 11R-HPOTrE. This chain is Manganese lipoxygenase, found in Colletotrichum gloeosporioides (strain Cg-14) (Anthracnose fungus).